A 131-amino-acid chain; its full sequence is Biogenesis of lysosome-related organelles complex 1 subunit CNL1 (131 aa).

The segment at 1–29 (MSAPDSNSGHAHDSAQNEGAAEGTRDPFG) is disordered. Positions 73–101 (DAIDINIEEMRRILQKCEELETHFDMLDQ) form a coiled coil.

The protein belongs to the BLOC1S4 family. In terms of assembly, component of the biogenesis of lysosome-related organelles complex-1 (BLOC-1).

Its subcellular location is the cytoplasm. Its function is as follows. Component of the biogenesis of lysosome-related organelles complex-1 (BLOC-1), a complex that is involved in endosomal cargo sorting. The sequence is that of Biogenesis of lysosome-related organelles complex 1 subunit CNL1 (CLN1) from Lachancea thermotolerans (strain ATCC 56472 / CBS 6340 / NRRL Y-8284) (Yeast).